The sequence spans 494 residues: tRNA-2-methylthio-N(6)-dimethylallyladenosine synthase (494 aa).

One can recognise an MTTase N-terminal domain in the interval 5-121 (RTYQVRTYGC…LPALLERARV (117 aa)). 6 residues coordinate [4Fe-4S] cluster: C14, C50, C84, C158, C162, and C165. Residues 144 to 374 (RESVYAAWVA…LELQERISEE (231 aa)) enclose the Radical SAM core domain. Residues 377 to 446 (AKFVGREVEV…PHHLVADSGI (70 aa)) enclose the TRAM domain. Positions 458–468 (WEARNAPERRP) are enriched in basic and acidic residues. A disordered region spans residues 458 to 494 (WEARNAPERRPTGVLLGMPKVGAPEPQPSVVGGCCDS).

This sequence belongs to the methylthiotransferase family. MiaB subfamily. Monomer. The cofactor is [4Fe-4S] cluster.

It is found in the cytoplasm. The catalysed reaction is N(6)-dimethylallyladenosine(37) in tRNA + (sulfur carrier)-SH + AH2 + 2 S-adenosyl-L-methionine = 2-methylsulfanyl-N(6)-dimethylallyladenosine(37) in tRNA + (sulfur carrier)-H + 5'-deoxyadenosine + L-methionine + A + S-adenosyl-L-homocysteine + 2 H(+). Its function is as follows. Catalyzes the methylthiolation of N6-(dimethylallyl)adenosine (i(6)A), leading to the formation of 2-methylthio-N6-(dimethylallyl)adenosine (ms(2)i(6)A) at position 37 in tRNAs that read codons beginning with uridine. This is tRNA-2-methylthio-N(6)-dimethylallyladenosine synthase from Thermobifida fusca (strain YX).